We begin with the raw amino-acid sequence, 152 residues long: Proteolipid protein 2 (152 aa).

The N-linked (GlcNAc...) asparagine glycan is linked to N18. Residues 19–137 (FSRTRKGILL…DAYVTFPVRQ (119 aa)) enclose the MARVEL domain. A run of 3 helical transmembrane segments spans residues 25-45 (GILL…FSAS), 48-68 (GYSS…VVYM), and 85-105 (FFRT…VLVE). N108 carries an N-linked (GlcNAc...) asparagine glycan. The helical transmembrane segment at 112–132 (IVAGVLGLIATCLFGYDAYVT) threads the bilayer.

As to expression, enriched in colonic mucosa. The expression of A4 follows a gradient along the crypto-villus axis with the most abundant message occurring in the lower half of the crypt.

The protein resides in the membrane. Functionally, may play a role in cell differentiation in the intestinal epithelium. In Homo sapiens (Human), this protein is Proteolipid protein 2 (PLP2).